A 394-amino-acid chain; its full sequence is MPTIETRTEPMVINMGPQHPSMHGVLRLMVTLDGENVVDCEPVIGYLHRGMEKIAESRSNIMFVPYVSRWDYAAGMFNEAITVNAPERLADIKVPKRASYIRVIMLELNRIANHLLWLGPFLADVGAQTPFFYIFREREMIYDLFEAVSGMRFINNNYFRMGGVAADLTYGWVSKCLDFCDYFLPKVDEYERLITNNPIFIRRLDGVGTISREDAINWGLSGPMLRGSGVKWDLRRVDHYECYDDFDWEVQWETKGDCLARYYLRIREMRESVKIIKQALEHLPGGPYENLEAKRMMEGRKSEWNSFEYQFLGKKLAPTFKIPEGELYARVETGKGELGIYLIGDENVFPWRWKIRAPDFNNLQVLPQLLKGMKVADIVAILGSIDVIMGSVDR.

Belongs to the complex I 49 kDa subunit family. As to quaternary structure, NDH-1 can be composed of about 15 different subunits; different subcomplexes with different compositions have been identified which probably have different functions.

Its subcellular location is the cellular thylakoid membrane. The catalysed reaction is a plastoquinone + NADH + (n+1) H(+)(in) = a plastoquinol + NAD(+) + n H(+)(out). The enzyme catalyses a plastoquinone + NADPH + (n+1) H(+)(in) = a plastoquinol + NADP(+) + n H(+)(out). Its function is as follows. NDH-1 shuttles electrons from an unknown electron donor, via FMN and iron-sulfur (Fe-S) centers, to quinones in the respiratory and/or the photosynthetic chain. The immediate electron acceptor for the enzyme in this species is believed to be plastoquinone. Couples the redox reaction to proton translocation, and thus conserves the redox energy in a proton gradient. Cyanobacterial NDH-1 also plays a role in inorganic carbon-concentration. This Acaryochloris marina (strain MBIC 11017) protein is NAD(P)H-quinone oxidoreductase subunit H.